The sequence spans 1009 residues: Serine/threonine-protein phosphatase BSL2 homolog (1009 aa).

The segment at 1–48 (MDVDSRMTTESDSDSDAAAQGGGGGGFGSETSSASPSAPGTPTAMGAG) is disordered. Over residues 29–45 (SETSSASPSAPGTPTAM) the composition is skewed to low complexity. Kelch repeat units follow at residues 136-182 (SSAG…VATA), 240-288 (FLLT…TASA), 293-344 (LLLL…FVNA), 349-396 (SGGA…DAAG), and 417-463 (MIYV…IQAG). The segment at 549-572 (QVNGEAEHSPDREQSPDATPSVKQ) is disordered. Residues 553–563 (EAEHSPDREQS) are compositionally biased toward basic and acidic residues. Mn(2+)-binding residues include Asp711, His713, Asp745, and Asn777. The Proton donor role is filled by His778. Positions 830 and 909 each coordinate Mn(2+). The segment at 984–1009 (NANRPPTPTRGRPQAANNDRGSLAWI) is disordered.

Belongs to the PPP phosphatase family. BSU subfamily. It depends on Mn(2+) as a cofactor.

Its subcellular location is the nucleus. The catalysed reaction is O-phospho-L-seryl-[protein] + H2O = L-seryl-[protein] + phosphate. It catalyses the reaction O-phospho-L-threonyl-[protein] + H2O = L-threonyl-[protein] + phosphate. The polypeptide is Serine/threonine-protein phosphatase BSL2 homolog (BSL2) (Oryza sativa subsp. japonica (Rice)).